The sequence spans 601 residues: ATP-dependent lipid A-core flippase (601 aa).

5 helical membrane passes run Cys33–Ile53, Val72–Tyr92, Val158–Val178, Leu255–Val275, and Thr283–Ile303. The ABC transmembrane type-1 domain occupies Val34 to Arg315. Residues Ile347–Met583 form the ABC transporter domain. Position 381–388 (Gly381–Thr388) interacts with ATP.

Belongs to the ABC transporter superfamily. Lipid exporter (TC 3.A.1.106) family. Homodimer.

It localises to the cell inner membrane. It catalyses the reaction ATP + H2O + lipid A-core oligosaccharideSide 1 = ADP + phosphate + lipid A-core oligosaccharideSide 2.. Functionally, involved in lipopolysaccharide (LPS) biosynthesis. Translocates lipid A-core from the inner to the outer leaflet of the inner membrane. Transmembrane domains (TMD) form a pore in the inner membrane and the ATP-binding domain (NBD) is responsible for energy generation. The protein is ATP-dependent lipid A-core flippase of Methylococcus capsulatus (strain ATCC 33009 / NCIMB 11132 / Bath).